A 223-amino-acid polypeptide reads, in one-letter code: Na(+)-translocating NADH-quinone reductase subunit D (223 aa).

Transmembrane regions (helical) follow at residues 42–62 (TVMA…ISMI), 66–86 (IPSS…VIVV), 103–123 (VFVG…AFAM), 131–151 (FFDG…LGFI), and 178–198 (NGLL…IWAL).

Belongs to the NqrDE/RnfAE family. In terms of assembly, composed of six subunits; NqrA, NqrB, NqrC, NqrD, NqrE and NqrF.

The protein localises to the cell inner membrane. It carries out the reaction a ubiquinone + n Na(+)(in) + NADH + H(+) = a ubiquinol + n Na(+)(out) + NAD(+). In terms of biological role, NQR complex catalyzes the reduction of ubiquinone-1 to ubiquinol by two successive reactions, coupled with the transport of Na(+) ions from the cytoplasm to the periplasm. NqrA to NqrE are probably involved in the second step, the conversion of ubisemiquinone to ubiquinol. In Pseudomonas paraeruginosa (strain DSM 24068 / PA7) (Pseudomonas aeruginosa (strain PA7)), this protein is Na(+)-translocating NADH-quinone reductase subunit D.